The following is an 81-amino-acid chain: Sulfur carrier protein TusA (81 aa).

Catalysis depends on C19, which acts as the Cysteine persulfide intermediate.

Belongs to the sulfur carrier protein TusA family. In terms of assembly, interacts with IscS.

The protein resides in the cytoplasm. It functions in the pathway tRNA modification. Its function is as follows. Sulfur carrier protein involved in sulfur trafficking in the cell. Part of a sulfur-relay system required for 2-thiolation during synthesis of 2-thiouridine of the modified wobble base 5-methylaminomethyl-2-thiouridine (mnm(5)s(2)U) in tRNA. Interacts with IscS and stimulates its cysteine desulfurase activity. Accepts an activated sulfur from IscS, which is then transferred to TusD, and thus determines the direction of sulfur flow from IscS to 2-thiouridine formation. Also appears to be involved in sulfur transfer for the biosynthesis of molybdopterin. The sequence is that of Sulfur carrier protein TusA from Klebsiella pneumoniae subsp. pneumoniae (strain ATCC 700721 / MGH 78578).